A 114-amino-acid chain; its full sequence is T cell receptor beta variable 4-3 (114 aa).

Residues 1 to 21 (MGCRLLCCAVLCLLGAVPMET) form the signal peptide. The region spanning 22–114 (GVTQTPRHLV…SALYLCASSQ (93 aa)) is the Ig-like domain. An intrachain disulfide couples cysteine 42 to cysteine 110. N-linked (GlcNAc...) asparagine glycans are attached at residues asparagine 76 and asparagine 89.

Alpha-beta TR is a heterodimer composed of an alpha and beta chain; disulfide-linked. The alpha-beta TR is associated with the transmembrane signaling CD3 coreceptor proteins to form the TR-CD3 (TcR or TCR). The assembly of alpha-beta TR heterodimers with CD3 occurs in the endoplasmic reticulum where a single alpha-beta TR heterodimer associates with one CD3D-CD3E heterodimer, one CD3G-CD3E heterodimer and one CD247 homodimer forming a stable octameric structure. CD3D-CD3E and CD3G-CD3E heterodimers preferentially associate with TR alpha and TR beta chains, respectively. The association of the CD247 homodimer is the last step of TcR assembly in the endoplasmic reticulum and is required for transport to the cell surface.

It is found in the cell membrane. Functionally, v region of the variable domain of T cell receptor (TR) beta chain that participates in the antigen recognition. Alpha-beta T cell receptors are antigen specific receptors which are essential to the immune response and are present on the cell surface of T lymphocytes. Recognize peptide-major histocompatibility (MH) (pMH) complexes that are displayed by antigen presenting cells (APC), a prerequisite for efficient T cell adaptive immunity against pathogens. Binding of alpha-beta TR to pMH complex initiates TR-CD3 clustering on the cell surface and intracellular activation of LCK that phosphorylates the ITAM motifs of CD3G, CD3D, CD3E and CD247 enabling the recruitment of ZAP70. In turn ZAP70 phosphorylates LAT, which recruits numerous signaling molecules to form the LAT signalosome. The LAT signalosome propagates signal branching to three major signaling pathways, the calcium, the mitogen-activated protein kinase (MAPK) kinase and the nuclear factor NF-kappa-B (NF-kB) pathways, leading to the mobilization of transcription factors that are critical for gene expression and essential for T cell growth and differentiation. The T cell repertoire is generated in the thymus, by V-(D)-J rearrangement. This repertoire is then shaped by intrathymic selection events to generate a peripheral T cell pool of self-MH restricted, non-autoaggressive T cells. Post-thymic interaction of alpha-beta TR with the pMH complexes shapes TR structural and functional avidity. This Homo sapiens (Human) protein is T cell receptor beta variable 4-3.